Here is a 203-residue protein sequence, read N- to C-terminus: Thymidylate kinase (203 aa).

10–17 (GVEGSGKT) serves as a coordination point for ATP.

This sequence belongs to the thymidylate kinase family.

It catalyses the reaction dTMP + ATP = dTDP + ADP. Phosphorylation of dTMP to form dTDP in both de novo and salvage pathways of dTTP synthesis. This chain is Thymidylate kinase, found in Carboxydothermus hydrogenoformans (strain ATCC BAA-161 / DSM 6008 / Z-2901).